The sequence spans 191 residues: Small ribosomal subunit protein uS5 (191 aa).

One can recognise an S5 DRBM domain in the interval 21 to 84; it reads LVDKLVTINR…ERAKRTMIRV (64 aa). Residues 161-191 are disordered; the sequence is PRHVASRRGKKAAELFGKREQGQTEAEVTNG. The span at 171 to 182 shows a compositional bias: basic and acidic residues; the sequence is KAAELFGKREQG.

The protein belongs to the universal ribosomal protein uS5 family. As to quaternary structure, part of the 30S ribosomal subunit. Contacts proteins S4 and S8.

Functionally, with S4 and S12 plays an important role in translational accuracy. Located at the back of the 30S subunit body where it stabilizes the conformation of the head with respect to the body. This Gluconobacter oxydans (strain 621H) (Gluconobacter suboxydans) protein is Small ribosomal subunit protein uS5.